Consider the following 476-residue polypeptide: Sulfate adenylyltransferase subunit 1 (476 aa).

The 215-residue stretch at 24–238 (KSLLRFLTCG…ELLEYVDIDR (215 aa)) folds into the tr-type G domain. Residues 33-40 (GSVDDGKS) are G1. Residue 33–40 (GSVDDGKS) coordinates GTP. The G2 stretch occupies residues 91–95 (GITID). The segment at 112–115 (DTPG) is G3. GTP contacts are provided by residues 112–116 (DTPGH) and 167–170 (NKMD). The tract at residues 167 to 170 (NKMD) is G4. The G5 stretch occupies residues 205–207 (SAL).

Belongs to the TRAFAC class translation factor GTPase superfamily. Classic translation factor GTPase family. CysN/NodQ subfamily. In terms of assembly, heterodimer composed of CysD, the smaller subunit, and CysN.

The catalysed reaction is sulfate + ATP + H(+) = adenosine 5'-phosphosulfate + diphosphate. Its pathway is sulfur metabolism; hydrogen sulfide biosynthesis; sulfite from sulfate: step 1/3. Its function is as follows. With CysD forms the ATP sulfurylase (ATPS) that catalyzes the adenylation of sulfate producing adenosine 5'-phosphosulfate (APS) and diphosphate, the first enzymatic step in sulfur assimilation pathway. APS synthesis involves the formation of a high-energy phosphoric-sulfuric acid anhydride bond driven by GTP hydrolysis by CysN coupled to ATP hydrolysis by CysD. This chain is Sulfate adenylyltransferase subunit 1, found in Vibrio cholerae serotype O1 (strain M66-2).